Here is a 375-residue protein sequence, read N- to C-terminus: 23S rRNA (uracil(747)-C(5))-methyltransferase RlmC (375 aa).

Residues C3, C11, C14, and C87 each contribute to the [4Fe-4S] cluster site. Residues Q212, F241, E262, and N307 each coordinate S-adenosyl-L-methionine. The active-site Nucleophile is the C334.

This sequence belongs to the class I-like SAM-binding methyltransferase superfamily. RNA M5U methyltransferase family. RlmC subfamily.

It catalyses the reaction uridine(747) in 23S rRNA + S-adenosyl-L-methionine = 5-methyluridine(747) in 23S rRNA + S-adenosyl-L-homocysteine + H(+). Functionally, catalyzes the formation of 5-methyl-uridine at position 747 (m5U747) in 23S rRNA. This Escherichia coli O9:H4 (strain HS) protein is 23S rRNA (uracil(747)-C(5))-methyltransferase RlmC.